Consider the following 451-residue polypeptide: Bifunctional protein GlmU (451 aa).

The tract at residues methionine 1–lysine 236 is pyrophosphorylase. UDP-N-acetyl-alpha-D-glucosamine is bound by residues leucine 17–glycine 20, lysine 31, glutamine 79, glycine 84–threonine 85, tyrosine 105–aspartate 107, glycine 144, glutamate 162, asparagine 177, and asparagine 234. Mg(2+) is bound at residue aspartate 107. Position 234 (asparagine 234) interacts with Mg(2+). The segment at valine 237–asparagine 257 is linker. Residues glycine 258–valine 451 are N-acetyltransferase. 2 residues coordinate UDP-N-acetyl-alpha-D-glucosamine: arginine 323 and lysine 341. Histidine 353 functions as the Proton acceptor in the catalytic mechanism. Positions 356 and 367 each coordinate UDP-N-acetyl-alpha-D-glucosamine. Residues alanine 370, asparagine 376–tyrosine 377, serine 395, alanine 413, and arginine 430 each bind acetyl-CoA.

This sequence in the N-terminal section; belongs to the N-acetylglucosamine-1-phosphate uridyltransferase family. In the C-terminal section; belongs to the transferase hexapeptide repeat family. As to quaternary structure, homotrimer. Mg(2+) is required as a cofactor.

The protein resides in the cytoplasm. It carries out the reaction alpha-D-glucosamine 1-phosphate + acetyl-CoA = N-acetyl-alpha-D-glucosamine 1-phosphate + CoA + H(+). It catalyses the reaction N-acetyl-alpha-D-glucosamine 1-phosphate + UTP + H(+) = UDP-N-acetyl-alpha-D-glucosamine + diphosphate. It participates in nucleotide-sugar biosynthesis; UDP-N-acetyl-alpha-D-glucosamine biosynthesis; N-acetyl-alpha-D-glucosamine 1-phosphate from alpha-D-glucosamine 6-phosphate (route II): step 2/2. Its pathway is nucleotide-sugar biosynthesis; UDP-N-acetyl-alpha-D-glucosamine biosynthesis; UDP-N-acetyl-alpha-D-glucosamine from N-acetyl-alpha-D-glucosamine 1-phosphate: step 1/1. It functions in the pathway bacterial outer membrane biogenesis; LPS lipid A biosynthesis. In terms of biological role, catalyzes the last two sequential reactions in the de novo biosynthetic pathway for UDP-N-acetylglucosamine (UDP-GlcNAc). The C-terminal domain catalyzes the transfer of acetyl group from acetyl coenzyme A to glucosamine-1-phosphate (GlcN-1-P) to produce N-acetylglucosamine-1-phosphate (GlcNAc-1-P), which is converted into UDP-GlcNAc by the transfer of uridine 5-monophosphate (from uridine 5-triphosphate), a reaction catalyzed by the N-terminal domain. This is Bifunctional protein GlmU from Granulibacter bethesdensis (strain ATCC BAA-1260 / CGDNIH1).